The following is a 283-amino-acid chain: Protein MGARP (283 aa).

A disordered region spans residues 1 to 36 (MYLRRAVSKTLALPRRAPPGPAPLGKDASLRRMSSR). The Cytoplasmic segment spans residues 1–41 (MYLRRAVSKTLALPRRAPPGPAPLGKDASLRRMSSRKFPGT). Residues 42–64 (SGSNMIYYLVVGVTVSAGGYYTY) form a helical; Anchor for type IV membrane protein membrane-spanning segment. Over 65–283 (KALTSKQVRR…VTEETASPQG (219 aa)) the chain is Mitochondrial intermembrane. Disordered stretches follow at residues 78–101 (VAEPKEQTKAELQPLPGEKEEHVA) and 118–283 (AESV…SPQG). A compositionally biased stretch (low complexity) spans 128-160 (EAAVVLPEESQASAPSEVPAEAAVVEASLSSSE). Polar residues-rich tracts occupy residues 171–184 (VETTESVPESTQEV) and 199–220 (ADTSQEGADTSQEGADTSQEGA). A compositionally biased stretch (basic and acidic residues) spans 221-245 (DTTKEEADNSKEAEGTTTEDPRSIS).

Interacts with RHOT1/Miro-1, RHOT2/Miro-2, TRAK1/OIP106 and TRAK2/GRIF1. As to expression, expressed in the ovary, testis, brain, adrenal glands and the compartments of the visual nervous system. Expressed in corneal endothelium (CE) (at protein level). Expressed in steroidogenic tissues with the highest level of expression observed in the adrenal gland. Weakly expressed in placenta. Weakly expressed in astrocytes and neurons under normoxia. Strongly expressed in astrocytes and neurons under hypoxia. Expressed in each layer of the retina, with particularly higher staining in the inner segment of the photoreceptor (IS), the outer plexiform layer (OPL) and the ganglion cell layer (GCL).

The protein localises to the mitochondrion. It is found in the mitochondrion outer membrane. The protein resides in the mitochondrion inner membrane. Its function is as follows. Plays a role in the trafficking of mitochondria along microtubules. Regulates the kinesin-mediated axonal transport of mitochondria to nerve terminals along microtubules during hypoxia. Participates in the translocation of TRAK2/GRIF1 from the cytoplasm to the mitochondrion. Also plays a role in steroidogenesis through maintenance of mitochondrial abundance and morphology. Plays an inhibitory role during neocortex development by regulating mitochondrial morphology, distribution and motility in neocortical neurons. This chain is Protein MGARP (Mgarp), found in Mus musculus (Mouse).